A 94-amino-acid chain; its full sequence is Small ribosomal subunit protein bS20 (94 aa).

This sequence belongs to the bacterial ribosomal protein bS20 family.

Its function is as follows. Binds directly to 16S ribosomal RNA. This chain is Small ribosomal subunit protein bS20, found in Symbiobacterium thermophilum (strain DSM 24528 / JCM 14929 / IAM 14863 / T).